A 59-amino-acid chain; its full sequence is Large ribosomal subunit protein uL30 (59 aa).

Belongs to the universal ribosomal protein uL30 family. Part of the 50S ribosomal subunit.

This is Large ribosomal subunit protein uL30 from Streptococcus agalactiae serotype Ia (strain ATCC 27591 / A909 / CDC SS700).